Consider the following 369-residue polypeptide: Putative 2-aminoethylphosphonate import ATP-binding protein PhnT (369 aa).

One can recognise an ABC transporter domain in the interval isoleucine 19 to leucine 250. An ATP-binding site is contributed by glycine 51–threonine 58.

Belongs to the ABC transporter superfamily. 2-aminoethylphosphonate importer (TC 3.A.1.11.5) family.

The protein resides in the cell inner membrane. Functionally, probably part of the PhnSTUV complex (TC 3.A.1.11.5) involved in 2-aminoethylphosphonate import. Probably responsible for energy coupling to the transport system. The sequence is that of Putative 2-aminoethylphosphonate import ATP-binding protein PhnT (phnT) from Salmonella typhimurium (strain LT2 / SGSC1412 / ATCC 700720).